Consider the following 263-residue polypeptide: uncharacterized protein (263 aa).

7 helical membrane-spanning segments follow: residues 1-21 (MLVIVLQGLAGFLSIIAILCQ), 38-58 (LFLLDFVGNGLYLYCALHYCY), 82-102 (IPISSFLILKDFCVSCCCMMV), 118-138 (GISITSIIIISVFLVLGIFTY), 151-171 (GKFGVFYLEHINYLWVMANLL), 196-216 (FALISFLAESIDLLGRLVIPT), and 230-250 (FWVKLIQFVTLLVILCQVQYV).

The protein localises to the membrane. This is an uncharacterized protein from Saccharomyces cerevisiae (strain ATCC 204508 / S288c) (Baker's yeast).